The primary structure comprises 316 residues: Pantothenate kinase (316 aa).

Position 95-102 (95-102) interacts with ATP; it reads GSVAVGKS.

Belongs to the prokaryotic pantothenate kinase family.

The protein localises to the cytoplasm. The catalysed reaction is (R)-pantothenate + ATP = (R)-4'-phosphopantothenate + ADP + H(+). Its pathway is cofactor biosynthesis; coenzyme A biosynthesis; CoA from (R)-pantothenate: step 1/5. The polypeptide is Pantothenate kinase (Enterobacter sp. (strain 638)).